The sequence spans 326 residues: tRNA-modifying protein YgfZ (326 aa).

2 residues coordinate folate: Trp-27 and Trp-189.

It belongs to the tRNA-modifying YgfZ family.

It localises to the cytoplasm. Functionally, folate-binding protein involved in regulating the level of ATP-DnaA and in the modification of some tRNAs. It is probably a key factor in regulatory networks that act via tRNA modification, such as initiation of chromosomal replication. The polypeptide is tRNA-modifying protein YgfZ (Escherichia coli O17:K52:H18 (strain UMN026 / ExPEC)).